The following is a 47-amino-acid chain: Large ribosomal subunit protein bL32c (47 aa).

Belongs to the bacterial ribosomal protein bL32 family.

The protein localises to the plastid. This chain is Large ribosomal subunit protein bL32c (rpl32), found in Prototheca wickerhamii.